Reading from the N-terminus, the 175-residue chain is MDFKQYSPEELKECSMIEVVHSVLGDKRQATTFNELVQEIAQVLGLSQEQVNAKIAQFYTDLNIDGRFINLGENRWGLRSWYPYEQIDEEILPQPKPKKKRKVEDDGFDDYIEEDEDFDDADVTEDEDDDVEDLDKVLEDEDGDDDDLDDLDEDEDDFAEEELEYDETEEEEEEL.

The 68-residue stretch at cysteine 14–tryptophan 81 folds into the HTH HARE-type domain. Residues isoleucine 91 to leucine 175 form a disordered region. The span at aspartate 106–leucine 175 shows a compositional bias: acidic residues.

The protein belongs to the RpoE family. In terms of assembly, RNAP is composed of a core of 2 alpha, a beta and a beta' subunits. The core is associated with a delta subunit and one of several sigma factors.

Participates in both the initiation and recycling phases of transcription. In the presence of the delta subunit, RNAP displays an increased specificity of transcription, a decreased affinity for nucleic acids, and an increased efficiency of RNA synthesis because of enhanced recycling. This Bacillus anthracis protein is Probable DNA-directed RNA polymerase subunit delta.